The primary structure comprises 192 residues: Cytochrome b-245 light chain (192 aa).

The Cytoplasmic portion of the chain corresponds to 2–7 (GQIEWA). Residues 8 to 30 (MWANEQALASGLILMTGGIVATA) traverse the membrane as a helical segment. Topologically, residues 31 to 35 (GQFTQ) are extracellular. Residues 36-53 (WYLGTYSIAAGVLVCLLE) form a helical membrane-spanning segment. At 54-69 (YPRGRRTKGSTMERCE) the chain is on the cytoplasmic side. The stretch at 70 to 80 (QKYMTKVVKAF) is an intramembrane region. At 81 to 86 (GPLSRN) the chain is on the cytoplasmic side. The helical transmembrane segment at 87–104 (YYIRAFLHLGLSVPAGFL) threads the bilayer. Position 105 (Leu105) is a topological domain, extracellular. Residues 106–126 (ATILGTACLAIASGIYLLAAI) traverse the membrane as a helical segment. Topologically, residues 127-192 (RGEQWTPIEP…TPCPVTDEVV (66 aa)) are cytoplasmic. Positions 134 to 192 (IEPKPKERPQVGGTIKQPPSNPPPRPPPEARKKPGEEAVAGVPRGAPRKTPCPVTDEVV) are disordered. Thr147 is subject to Phosphothreonine. Lys149 is covalently cross-linked (Glycyl lysine isopeptide (Lys-Gly) (interchain with G-Cter in ubiquitin)).

This sequence belongs to the p22phox family. Component of the phagocyte NADPH oxidase core complex/cytochrome b558 complex, composed of CYBB (heavy chain (beta)) and CYBA (light chain (alpha)). Component of the phagocyte NADPH oxidase complex composed of an obligatory core heterodimer formed by the membrane proteins CYBA and CYBB and the cytosolic regulatory subunits NCF1/p47-phox, NCF2/p67-phox, NCF4/p40-phox and the small GTPase RAC1 or RAC2. Interacts with NCF1 (via SH3 domain). Interacts with SH3PXD2A. Interacts with DUOX1, DUOX2 and TPO. Interacts with NOX4; this interaction mediates superoxide generation. Interacts with calprotectin (S100A8/9). Interacts with GBP7. Interacts with NOXO1. Forms a heterodimer with NOX3 and is essential for activity and cell membrane localization of NOX3. Interacts with NOX1. Phosphorylation at Thr-147 enhances NADPH oxidase activity by promoting NCF1/p47-phox binding. Post-translationally, ubiquitinated at Lys-149 likely by RNF145.

The protein localises to the cell membrane. Subunit of NADPH oxidase complexes that is required for the NADPH oxidase activity that generates, in various cell types, superoxide from molecular oxygen utilizing NADPH as an electron donor. Subunit of the phagocyte NADPH oxidase complex that mediates the transfer of electrons from cytosolic NADPH to O2 to produce the superoxide anion (O2(-)). In the activated complex, electrons are first transferred from NADPH to flavin adenine dinucleotide (FAD) and subsequently transferred via two heme molecules to molecular oxygen, producing superoxide through an outer-sphere reaction. Activation of the NADPH oxidase complex is initiated by the assembly of cytosolic subunits of the NADPH oxidase complex with the core NADPH oxidase complex to form a complex at the plasma membrane or phagosomal membrane. This activation process is initiated by phosphorylation dependent binding of the cytosolic NCF1/p47-phox subunit to the C-terminus of CYBA/p22-phox. Aassociates with NOX3 to form a functional NADPH oxidase constitutively generating superoxide. This Sus scrofa (Pig) protein is Cytochrome b-245 light chain.